Here is a 520-residue protein sequence, read N- to C-terminus: Actin nucleation-promoting factor WAS (520 aa).

A compositionally biased stretch (gly residues) spans 1-17 (MNSGPGPVGGRPGGRGG). Disordered regions lie at residues 1 to 23 (MNSG…VQQN) and 148 to 247 (QKRN…SGFK). The region spanning 41 to 150 (LGRKCWTLAT…ALVQEKIQKR (110 aa)) is the WH1 domain. Polar residues predominate over residues 203–213 (DIQNPDITSSR). The region spanning 240–253 (IGAPSGFKHVSHVG) is the CRIB domain. Residue Y293 is modified to Phosphotyrosine. A disordered region spans residues 307–520 (QEMRRQEPLP…EDEEDDEWDD (214 aa)). Gly residues predominate over residues 323–342 (RGGGGGGGGGGGGGGGGGGQ). GRSGPLPPXP motif repeat units follow at residues 354–363 (GRSGPLPPVP) and 393–402 (GRSGPPPPPL). Residues 358-437 (PLPPVPMGGA…PAPPPLPPTP (80 aa)) show a composition bias toward pro residues. The WH2 domain maps to 448-465 (GRGALLDQIRQGIQLNKT). Residues 471 to 482 (NSVQQPPAQQSE) are compositionally biased toward polar residues. S501 and S502 each carry phosphoserine. Residues 504–520 (EGEDQTGEDEEDDEWDD) are compositionally biased toward acidic residues.

Binds the Arp2/3 complex. Interacts with CDC42, RAC, NCK, HCK, FYN, SRC kinase FGR, BTK, ABL1, PSTPIP1, WIP, and to the p85 subunit of PLC-gamma. Interacts (via C-terminus) with ALDOA. Interacts with NCK1 (via SH3 domains). Interacts with FCHSD2. Phosphorylated at Tyr-293 by FYN and HCK, inducing WAS effector activity after TCR engagement. Phosphorylation at Tyr-293 enhances WAS activity in promoting actin polymerization and filopodia formation.

It localises to the cytoplasm. The protein localises to the cytoskeleton. The protein resides in the nucleus. Effector protein for Rho-type GTPases that regulates actin filament reorganization via its interaction with the Arp2/3 complex. Important for efficient actin polymerization. Possible regulator of lymphocyte and platelet function. Mediates actin filament reorganization and the formation of actin pedestals upon infection by pathogenic bacteria. In addition to its role in the cytoplasmic cytoskeleton, also promotes actin polymerization in the nucleus, thereby regulating gene transcription and repair of damaged DNA. Promotes homologous recombination (HR) repair in response to DNA damage by promoting nuclear actin polymerization, leading to drive motility of double-strand breaks (DSBs). In Mus musculus (Mouse), this protein is Actin nucleation-promoting factor WAS (Was).